Reading from the N-terminus, the 338-residue chain is Protein WVD2-like 2 (338 aa).

The span at 1–14 (MGRELVDKHMDKKA) shows a compositional bias: basic and acidic residues. Positions 1 to 150 (MGRELVDKHM…SFSVASSSAT (150 aa)) are disordered. 2 stretches are compositionally biased toward polar residues: residues 15 to 37 (NSLT…STNE) and 59 to 69 (QGITETPGSHK). The segment covering 100-115 (NNSLGNGASHNSSSAS) has biased composition (low complexity). Residues 128–138 (RIPDHKMHHDE) are compositionally biased toward basic and acidic residues. Positions 177-214 (REFYQKLEEKQKALEAEKRENEKRLKEEQEAVTKQLRK) form a coiled coil. The tract at residues 222 to 338 (PVPSFYQEGP…GENGVGVVEE (117 aa)) is disordered. Polar residues predominate over residues 288–300 (TNSVPRTPNSSSK).

This sequence belongs to the TPX2 family. In terms of tissue distribution, expressed in seedlings.

The protein localises to the cytoplasm. The protein resides in the cytoskeleton. In terms of biological role, microtubule-associated protein (MAP) that regulates the orientation of interphase cortical microtubules. The polypeptide is Protein WVD2-like 2 (Arabidopsis thaliana (Mouse-ear cress)).